Consider the following 127-residue polypeptide: Small ribosomal subunit protein bS6 (127 aa).

It belongs to the bacterial ribosomal protein bS6 family.

Binds together with bS18 to 16S ribosomal RNA. This is Small ribosomal subunit protein bS6 from Sulfurovum sp. (strain NBC37-1).